A 153-amino-acid chain; its full sequence is Large ribosomal subunit protein uL15 (153 aa).

Positions 1–48 (MRLNELSPAPGSKKDRKRVGRGDAGRGNYSGRGMKGQKARSGGATRPG) are disordered.

It belongs to the universal ribosomal protein uL15 family. In terms of assembly, part of the 50S ribosomal subunit.

Its function is as follows. Binds to the 23S rRNA. The protein is Large ribosomal subunit protein uL15 of Dehalococcoides mccartyi (strain ATCC BAA-2266 / KCTC 15142 / 195) (Dehalococcoides ethenogenes (strain 195)).